We begin with the raw amino-acid sequence, 237 residues long: H/ACA ribonucleoprotein complex subunit 1 (237 aa).

Gly residues-rich tracts occupy residues 1–59 (MGFG…GGRG) and 172–237 (RGGG…RGRW). Disordered regions lie at residues 1–64 (MGFG…FDTG) and 157–237 (KPPQ…RGRW). 2 RGG-box regions span residues 4 to 56 (GKPR…GRGG) and 166 to 236 (KAFT…GRGR).

Belongs to the GAR1 family. In terms of assembly, component of the box H/ACA small nucleolar ribonucleoprotein (H/ACA snoRNP) complex consisting of Nop60B, Gar1, NPH2 and Nop10, and associated with H/ACA-type snoRNAs.

Its subcellular location is the nucleus. It is found in the nucleolus. Its function is as follows. Component of the box H/ACA small nucleolar ribonucleoprotein (H/ACA snoRNP) complex, which catalyzes pseudouridylation of rRNA. This involves the isomerization of uridine such that the ribose is subsequently attached to C5, instead of the normal N1. Pseudouridine ('psi') residues may serve to stabilize the conformation of rRNAs. Required for ribosome biogenesis. H/ACA snoRNP complex-dependent ribosome biogenesis is important in female germline cell differentiation during oogenesis. The protein is H/ACA ribonucleoprotein complex subunit 1 of Drosophila melanogaster (Fruit fly).